A 623-amino-acid chain; its full sequence is Chaperone protein DnaK (623 aa).

Position 197 is a phosphothreonine; by autocatalysis (Thr-197). A compositionally biased stretch (basic and acidic residues) spans 595 to 615 (AENMYKKDEPNTANDKKKKDD). Residues 595–623 (AENMYKKDEPNTANDKKKKDDDVIDAEVE) form a disordered region.

It belongs to the heat shock protein 70 family.

Its function is as follows. Acts as a chaperone. This Campylobacter jejuni subsp. doylei (strain ATCC BAA-1458 / RM4099 / 269.97) protein is Chaperone protein DnaK.